We begin with the raw amino-acid sequence, 228 residues long: 2-C-methyl-D-erythritol 4-phosphate cytidylyltransferase (228 aa).

Belongs to the IspD/TarI cytidylyltransferase family. IspD subfamily.

The enzyme catalyses 2-C-methyl-D-erythritol 4-phosphate + CTP + H(+) = 4-CDP-2-C-methyl-D-erythritol + diphosphate. The protein operates within isoprenoid biosynthesis; isopentenyl diphosphate biosynthesis via DXP pathway; isopentenyl diphosphate from 1-deoxy-D-xylulose 5-phosphate: step 2/6. In terms of biological role, catalyzes the formation of 4-diphosphocytidyl-2-C-methyl-D-erythritol from CTP and 2-C-methyl-D-erythritol 4-phosphate (MEP). The sequence is that of 2-C-methyl-D-erythritol 4-phosphate cytidylyltransferase from Geobacillus thermodenitrificans (strain NG80-2).